A 29-amino-acid chain; its full sequence is Cyclotide mden-F (29 aa).

The segment at residues 1 to 29 (GLPICGETCFFGKCNTPKCTCINPICYKN) is a cross-link (cyclopeptide (Gly-Asn)). 3 disulfides stabilise this stretch: C5–C19, C9–C21, and C14–C26.

It belongs to the cyclotide family. In terms of processing, this is a cyclic peptide.

In terms of biological role, probably participates in a plant defense mechanism. This is Cyclotide mden-F from Melicytus dentatus (Tree violet).